The sequence spans 1942 residues: Myosin-1 (1942 aa).

The Myosin N-terminal SH3-like domain maps to 33 to 82 (DAKSSVFVVDAKESFVKATVQSREGGKVTAKTEGGTTVTVKDDQVYPMNP). Ser36 is subject to Phosphoserine. Phosphothreonine occurs at positions 64 and 69. The Myosin motor domain maps to 86–785 (DKIEDMAMMT…LLGLLEEMRD (700 aa)). Lys130 bears the N6,N6,N6-trimethyllysine mark. An ATP-binding site is contributed by 179-186 (GESGAGKT). At Tyr389 the chain carries Phosphotyrosine. Thr419 is modified (phosphothreonine). Position 424 is a phosphotyrosine (Tyr424). A Phosphoserine modification is found at Ser625. Residues 662-684 (LNKLMTNLRSTHPHFVRCIIPNE) form an actin-binding region. His760 carries the pros-methylhistidine modification. An actin-binding region spans residues 764 to 778 (KFGHTKVFFKAGLLG). The IQ domain occupies 788 to 817 (LAQLITRTQAMCRGYLARVEYQKMVERRES). Positions 846–1942 (LLKSAETEKE…EVHTKIISEE (1097 aa)) form a coiled coil. A phosphoserine mark is found at Ser1095, Ser1099, Ser1165, Ser1240, and Ser1246. The segment at 1156-1175 (RLEEAGGATSAQIEMNKKRE) is disordered. The residue at position 1258 (Thr1258) is a Phosphothreonine. Ser1264 is modified (phosphoserine). Residues Thr1268 and Thr1289 each carry the phosphothreonine modification. Ser1291, Ser1295, Ser1306, and Ser1309 each carry phosphoserine. Tyr1467 is modified (phosphotyrosine). Thr1470 carries the phosphothreonine modification. Phosphoserine is present on Ser1477. The residue at position 1495 (Tyr1495) is a Phosphotyrosine. Ser1498 carries the phosphoserine modification. Thr1504 is subject to Phosphothreonine. The residue at position 1517 (Ser1517) is a Phosphoserine. At Thr1520 the chain carries Phosphothreonine. A phosphoserine mark is found at Ser1545, Ser1557, Ser1577, Ser1603, Ser1606, Ser1717, and Ser1729. Residues Thr1733 and Thr1739 each carry the phosphothreonine modification. Ser1742 bears the Phosphoserine mark.

This sequence belongs to the TRAFAC class myosin-kinesin ATPase superfamily. Myosin family. As to quaternary structure, muscle myosin is a hexameric protein that consists of 2 heavy chain subunits (MHC), 2 alkali light chain subunits (MLC) and 2 regulatory light chain subunits (MLC-2). Interacts with SLC26A5. As to expression, expressed in the cochlea (at protein level). Strongly expressed in spiral ganglion neurons with axonal sprouts and supporting cells around hair cells. In the organ of Corti, it is expressed in inner and outer hair cells, and in supporting cells.

The protein resides in the cytoplasm. The protein localises to the myofibril. Functionally, required for normal hearing. It plays a role in cochlear amplification of auditory stimuli, likely through the positive regulation of prestin (SLC26A5) activity and outer hair cell (OHC) electromotility. The sequence is that of Myosin-1 from Mus musculus (Mouse).